The chain runs to 46 residues: Large ribosomal subunit protein bL36A (46 aa).

Belongs to the bacterial ribosomal protein bL36 family.

The chain is Large ribosomal subunit protein bL36A from Sodalis glossinidius (strain morsitans).